A 1036-amino-acid chain; its full sequence is Isoleucine--tRNA ligase (1036 aa).

The 'HIGH' region signature appears at 48–58 (PTANGKPHVGH). The 'KMSKS' region signature appears at 590-594 (KMSKS). Lys593 provides a ligand contact to ATP.

The protein belongs to the class-I aminoacyl-tRNA synthetase family. IleS type 2 subfamily. In terms of assembly, monomer. It depends on Zn(2+) as a cofactor.

It is found in the cytoplasm. It catalyses the reaction tRNA(Ile) + L-isoleucine + ATP = L-isoleucyl-tRNA(Ile) + AMP + diphosphate. Catalyzes the attachment of isoleucine to tRNA(Ile). As IleRS can inadvertently accommodate and process structurally similar amino acids such as valine, to avoid such errors it has two additional distinct tRNA(Ile)-dependent editing activities. One activity is designated as 'pretransfer' editing and involves the hydrolysis of activated Val-AMP. The other activity is designated 'posttransfer' editing and involves deacylation of mischarged Val-tRNA(Ile). The protein is Isoleucine--tRNA ligase of Clostridium tetani (strain Massachusetts / E88).